The following is a 292-amino-acid chain: GTP cyclohydrolase FolE2 (292 aa).

The protein belongs to the GTP cyclohydrolase IV family.

The enzyme catalyses GTP + H2O = 7,8-dihydroneopterin 3'-triphosphate + formate + H(+). Its pathway is cofactor biosynthesis; 7,8-dihydroneopterin triphosphate biosynthesis; 7,8-dihydroneopterin triphosphate from GTP: step 1/1. Its function is as follows. Converts GTP to 7,8-dihydroneopterin triphosphate. The polypeptide is GTP cyclohydrolase FolE2 (Staphylococcus epidermidis (strain ATCC 35984 / DSM 28319 / BCRC 17069 / CCUG 31568 / BM 3577 / RP62A)).